The sequence spans 963 residues: Iron-responsive element-binding protein 2 (963 aa).

Residues Cys-512, Cys-578, and Cys-581 each contribute to the [4Fe-4S] cluster site.

Belongs to the aconitase/IPM isomerase family. In terms of assembly, interacts with RBCK1 only in iron-rich conditions. Interacts (when associated with the 4Fe-4S) with FBXL5. Interacts with CIAO1 and CIAO2A. [4Fe-4S] cluster is required as a cofactor. Post-translationally, ubiquitinated and degraded by the proteasome in presence of high level of iron and oxygen. Ubiquitinated by a SCF complex containing FBXL5. Upon iron and oxygen depletion FBXL5 is degraded, preventing ubiquitination and allowing its RNA-binding activity. Ubiquitously expressed in rat tissues, the highest amounts present in skeletal muscle and heart.

Its subcellular location is the cytoplasm. Functionally, RNA-binding protein that binds to iron-responsive elements (IRES), which are stem-loop structures found in the 5'-UTR of ferritin, and delta aminolevulinic acid synthase mRNAs, and in the 3'-UTR of transferrin receptor mRNA. Binding to the IRE element in ferritin results in the repression of its mRNA translation. Binding of the protein to the transferrin receptor mRNA inhibits the degradation of this otherwise rapidly degraded mRNA. This Rattus norvegicus (Rat) protein is Iron-responsive element-binding protein 2 (Ireb2).